The sequence spans 62 residues: Snaclec aspercetin subunit alpha (62 aa).

Cysteines 2 and 13 form a disulfide. The C-type lectin domain maps to 9–62 (YEGHCYRFFHPPKDWADAERFCTEQAKGGALVSIQRFGEEDFVSNLITKNLQRG).

Belongs to the snaclec family. In terms of assembly, heterodimer; disulfide-linked. In terms of tissue distribution, expressed by the venom gland.

The protein localises to the secreted. Its function is as follows. Snaclec that binds to von Willebrand factor (VWF) and induces its interaction with GPIbalpha (GP1BA) (via the vWF A1 domain), resulting in platelet aggregation. Intravenous injection in mice induces a dose-dependent drop in platelet count (thrombocytopenia). Pretreatment by intravenous injection by this protein in mice potentiates the hemorrhagic lesion in the skin provoked by the metalloproteinase BaP1 intradermally injected. This result is not observed when both BaP1 and this protein are injected simultaneously. The protein is Snaclec aspercetin subunit alpha of Bothrops asper (Terciopelo).